The primary structure comprises 812 residues: Valine--tRNA ligase (812 aa).

The 'HIGH' region signature appears at 46 to 56 (PTVSGQLHIGH). The 'KMSKS' region signature appears at 536-540 (KMSKS). Lys539 contacts ATP.

The protein belongs to the class-I aminoacyl-tRNA synthetase family. ValS type 2 subfamily. As to quaternary structure, monomer.

Its subcellular location is the cytoplasm. It catalyses the reaction tRNA(Val) + L-valine + ATP = L-valyl-tRNA(Val) + AMP + diphosphate. In terms of biological role, catalyzes the attachment of valine to tRNA(Val). As ValRS can inadvertently accommodate and process structurally similar amino acids such as threonine, to avoid such errors, it has a 'posttransfer' editing activity that hydrolyzes mischarged Thr-tRNA(Val) in a tRNA-dependent manner. This chain is Valine--tRNA ligase, found in Rickettsia bellii (strain RML369-C).